The sequence spans 291 residues: Nucleotide-binding protein lwe2422 (291 aa).

Position 13–20 (13–20 (GMSGAGKT)) interacts with ATP. 63–66 (DLRG) contributes to the GTP binding site.

Belongs to the RapZ-like family.

Displays ATPase and GTPase activities. The polypeptide is Nucleotide-binding protein lwe2422 (Listeria welshimeri serovar 6b (strain ATCC 35897 / DSM 20650 / CCUG 15529 / CIP 8149 / NCTC 11857 / SLCC 5334 / V8)).